We begin with the raw amino-acid sequence, 399 residues long: LIM/homeobox protein Lhx5 (399 aa).

2 LIM zinc-binding domains span residues 3-61 and 62-125; these read VHCA…RRFG and TKCA…ASAI. Disordered stretches follow at residues 136–185 and 301–399; these read CTDR…GPRT and PSSQ…NTVW. The span at 151 to 167 shows a compositional bias: basic and acidic residues; sequence DDTKETDNSTSSDKDTN. Positions 180–239 form a DNA-binding region, homeobox; it reads RRGPRTTIKAKQLETLKAAFVATPKPTRHIREQLAQETGLNMRVIQVWFQNRRSKERRMK.

It is found in the nucleus. In terms of biological role, probably involved in the patterning of the nervous system, in particular in the early specification of the diencephalon. The chain is LIM/homeobox protein Lhx5 (lhx5) from Danio rerio (Zebrafish).